Here is a 491-residue protein sequence, read N- to C-terminus: Proline-rich protein PRCC (491 aa).

Residues 1–100 (MSLVAYASSD…PPPPGVSPAE (100 aa)) are mediates interaction with MAD2L2. 3 disordered regions span residues 1 to 244 (MSLV…SPSA), 260 to 313 (ITQE…PAFQ), and 432 to 454 (EEKT…QRRK). Residues 10-26 (DESEPDEAEPEPEEEEA) show a composition bias toward acidic residues. Residues 40-49 (ASLPAPKGPA) are compositionally biased toward low complexity. A compositionally biased stretch (pro residues) spans 50–96 (LLPPPPQMLAPAFPPPLLLPPPTGDPRLQPPPPLPFGLGGFPPPPGV). A phosphoserine mark is found at S97, S114, S157, S159, S212, and S218. The span at 111-120 (GLPSPRGPGL) shows a compositional bias: low complexity. The segment covering 230–244 (APVVGTTTTTPSPSA) has biased composition (low complexity). A Phosphothreonine modification is found at T239. A phosphoserine mark is found at S241 and S267. A compositionally biased stretch (acidic residues) spans 262–272 (QEEDDSDEEVA). The span at 287–307 (GVEPYPYPIPTVPEELPPGTE) shows a compositional bias: pro residues.

As to quaternary structure, interacts with MAD2L2; the interaction is direct. Ubiquitous in fetal and adult tissues.

It is found in the nucleus. Its function is as follows. May regulate cell cycle progression through interaction with MAD2L2. The polypeptide is Proline-rich protein PRCC (PRCC) (Homo sapiens (Human)).